Here is a 222-residue protein sequence, read N- to C-terminus: Protein-L-isoaspartate O-methyltransferase (222 aa).

Ser-69 is a catalytic residue.

This sequence belongs to the methyltransferase superfamily. L-isoaspartyl/D-aspartyl protein methyltransferase family.

The protein resides in the cytoplasm. The enzyme catalyses [protein]-L-isoaspartate + S-adenosyl-L-methionine = [protein]-L-isoaspartate alpha-methyl ester + S-adenosyl-L-homocysteine. In terms of biological role, catalyzes the methyl esterification of L-isoaspartyl residues in peptides and proteins that result from spontaneous decomposition of normal L-aspartyl and L-asparaginyl residues. It plays a role in the repair and/or degradation of damaged proteins. In Nitrosomonas eutropha (strain DSM 101675 / C91 / Nm57), this protein is Protein-L-isoaspartate O-methyltransferase.